The sequence spans 545 residues: DNA-binding protein REPIN1 (545 aa).

Positions 1–50 (MLEQRCRGPTAMGPAQPWLFSGPSQESSQPDRGLRYQGKSAQPRGQTPGK) are disordered. Ser27 is modified (phosphoserine). The residue at position 39 (Lys39) is an N6-acetyllysine. Residues 52–74 (HRCAHCRKRFPGWVALWLHARRC) form a C2H2-type 1; atypical zinc finger. C2H2-type zinc fingers lie at residues 80–102 (LPCHECNQRFRHAPFLALHLQVH) and 111–133 (FICHLCGHSFRGWVALVLHLRAH). The C2H2-type 4; atypical zinc finger occupies 140-162 (ITCPECDRRFWRQKQLRAHLRRC). 11 consecutive C2H2-type zinc fingers follow at residues 172-194 (FICGNCGRSFAQWDQLVVHKRVH), 229-251 (FQCACCGKRFRHKPNLIAHRRVH), 257-279 (HQCPECGKRFTNKPYLTSHRRIH), 285-307 (YPCTECGRRFRHKPNLLSHSKIH), 353-375 (HSCSDCGRSFRLERFLRLHQRQH), 381-403 (FACTECGKNFGKKTHLVAHSRVH), 409-431 (FACEECGRRFSQGSHLAAHRRDH), 437-459 (FVCPDCGKAFRHKPYLAAHRRIH), 465-487 (YVCPDCGKAFSQKSNLVSHRRIH), 493-515 (YACPDCDRSFSQKSNLITHRKSH), and 521-543 (FCCAICGQTFDDEDRLLMHQKKH). Lys269 bears the N6-acetyllysine mark.

Homodimers and homomultimers. Found in a complex with RIP60 and RIP100.

The protein resides in the nucleus. Its subcellular location is the cytoplasm. It is found in the cytosol. Functionally, sequence-specific double-stranded DNA-binding protein. Binds ATT-rich and T-rich DNA sequences and facilitates DNA bending. May regulate the expression of genes involved in cellular fatty acid import, including SCARB1/CD36, and genes involved in lipid droplet formation. May regulate the expression of LCN2, and thereby influence iron metabolism and apoptosis-related pathways. May regulate the expression of genes involved in glucose transport. In Mus musculus (Mouse), this protein is DNA-binding protein REPIN1 (Repin1).